A 421-amino-acid chain; its full sequence is BEN domain-containing protein 5 (421 aa).

The residue at position 133 (Lys133) is an N6-acetyllysine. Residues 180-243 adopt a coiled-coil conformation; the sequence is RALYEELLRN…LNRRLQDVLL (64 aa). Residue Lys258 forms a Glycyl lysine isopeptide (Lys-Gly) (interchain with G-Cter in SUMO2) linkage. The 107-residue stretch at 302–408 folds into the BEN domain; the sequence is GSGIWVDEEK…EKIMDINKSC (107 aa).

Acts as a transcriptional repressor. This Homo sapiens (Human) protein is BEN domain-containing protein 5 (BEND5).